Here is an 847-residue protein sequence, read N- to C-terminus: Protein HIR2 (847 aa).

WD repeat units lie at residues 10–46 (LHDG…NAAT), 113–153 (KDNE…LKSS), 155–194 (ELKS…TTKL), 259–305 (KFSP…PLFD), and 309–348 (VVNS…LGDV). A disordered region spans residues 368–399 (PFKPKAEEPDTKLPPNKTAQQTTTNSKKQPKA). Residues 384–394 (KTAQQTTTNSK) are compositionally biased toward polar residues. WD repeat units lie at residues 508–548 (RKDN…IYVT) and 558–597 (PMLL…IAFP).

It belongs to the WD repeat HIR1 family.

The protein resides in the nucleus. Functionally, required for replication-independent chromatin assembly and for the periodic repression of histone gene transcription during the cell cycle. The protein is Protein HIR2 (HIR2) of Kluyveromyces lactis (strain ATCC 8585 / CBS 2359 / DSM 70799 / NBRC 1267 / NRRL Y-1140 / WM37) (Yeast).